Consider the following 815-residue polypeptide: Probable oligoxyloglucan-reducing end-specific xyloglucanase (815 aa).

The first 19 residues, 1 to 19 (MKFWLQQLGLAVLCASSAA), serve as a signal peptide directing secretion. The active-site Nucleophile is Asp-58. Asn-113 is a glycosylation site (N-linked (GlcNAc...) asparagine). The stretch at 118–128 (FVSNDRGATFT) is one BNR 1 repeat. Asn-180 is a glycosylation site (N-linked (GlcNAc...) asparagine). The BNR 2 repeat unit spans residues 218–228 (YYTTDGGKNWE). Residues Asn-246, Asn-290, and Asn-304 are each glycosylated (N-linked (GlcNAc...) asparagine). One copy of the BNR 3 repeat lies at 351–361 (YLSRDGGKTWK). Asn-387 carries an N-linked (GlcNAc...) asparagine glycan. The Proton donor role is filled by Asp-489. A BNR 4 repeat occupies 545–555 (YSTDGGSEWTK). Residues Asn-564 and Asn-603 are each glycosylated (N-linked (GlcNAc...) asparagine). A BNR 5 repeat occupies 649-658 (YVSTDGGLSY). A glycan (N-linked (GlcNAc...) asparagine) is linked at Asn-662. 2 BNR repeats span residues 696-706 (YHTTDFGKRWK) and 749-759 (YRSDDNGSTWD). Asn-754 carries N-linked (GlcNAc...) asparagine glycosylation.

The protein belongs to the glycosyl hydrolase 74 family.

The protein localises to the secreted. The enzyme catalyses Hydrolysis of cellobiose from the reducing end of xyloglucans consisting of a beta-(1-&gt;4)-linked glucan carrying alpha-D-xylosyl groups on O-6 of the glucose residues. To be a substrate, the first residue must be unsubstituted, the second residue may bear a xylosyl group, whether further glycosylated or not, and the third residue, which becomes the new terminus by the action of the enzyme, is preferably xylosylated, but this xylose residue must not be further substituted.. Oligoxyloglucan-reducing end-specific xyloglucanase involved in degradation of xyloglucans. Releases the first two glycosyl segments from oligoxyloglucans. Active against cotton xyloglucan, tamarind xyloglucan and tamarind xyloglucan oligomers. In Neosartorya fischeri (strain ATCC 1020 / DSM 3700 / CBS 544.65 / FGSC A1164 / JCM 1740 / NRRL 181 / WB 181) (Aspergillus fischerianus), this protein is Probable oligoxyloglucan-reducing end-specific xyloglucanase (xgcA).